The chain runs to 313 residues: Protein TIC 22-like, chloroplastic (313 aa).

The transit peptide at 1–96 directs the protein to the chloroplast; that stretch reads MNSNIFPPSK…RISDDGGGAR (96 aa).

It belongs to the Tic22 family.

Its subcellular location is the plastid. The protein resides in the chloroplast intermembrane space. Its function is as follows. Involved in protein precursor import into chloroplasts. The polypeptide is Protein TIC 22-like, chloroplastic (TIC22L) (Arabidopsis thaliana (Mouse-ear cress)).